A 129-amino-acid polypeptide reads, in one-letter code: Lysozyme C-2 (129 aa).

One can recognise a C-type lysozyme domain in the interval 1–129 (KVFERCELAR…VSSYVEGCTL (129 aa)). 4 disulfide bridges follow: Cys-6/Cys-127, Cys-30/Cys-115, Cys-65/Cys-81, and Cys-77/Cys-95. Residues Glu-35 and Asp-53 contribute to the active site.

It belongs to the glycosyl hydrolase 22 family. Monomer.

It carries out the reaction Hydrolysis of (1-&gt;4)-beta-linkages between N-acetylmuramic acid and N-acetyl-D-glucosamine residues in a peptidoglycan and between N-acetyl-D-glucosamine residues in chitodextrins.. Functionally, lysozymes have primarily a bacteriolytic function; those in tissues and body fluids are associated with the monocyte-macrophage system and enhance the activity of immunoagents. In Capra hircus (Goat), this protein is Lysozyme C-2.